Here is an 842-residue protein sequence, read N- to C-terminus: Glucans biosynthesis glucosyltransferase H (842 aa).

6 helical membrane-spanning segments follow: residues 141–161 (LLLL…TILP), 194–214 (ILLL…TALM), 513–533 (VFLT…FLAL), 570–590 (LFAS…ILIW), 615–635 (VLLA…AFLG), and 680–700 (FLFW…VSVI).

Belongs to the glycosyltransferase 2 family. OpgH subfamily.

It localises to the cell inner membrane. Its pathway is glycan metabolism; osmoregulated periplasmic glucan (OPG) biosynthesis. Its function is as follows. Involved in the biosynthesis of osmoregulated periplasmic glucans (OPGs). The sequence is that of Glucans biosynthesis glucosyltransferase H from Enterobacter sp. (strain 638).